Here is a 309-residue protein sequence, read N- to C-terminus: Mitochondrial brown fat uncoupling protein 1 (309 aa).

At 2–10 (VGHTESDVP) the chain is on the mitochondrial intermembrane side. A helical membrane pass occupies residues 11-32 (PTMAVKIFSAGVAACVADIITF). Solcar repeat units lie at residues 11–106 (PTMA…VQEF), 113–203 (ASLG…MKEA), and 212–297 (DDVP…LKQE). Topologically, residues 33–77 (PLDTAKVRLQVGSAIQGECLISSAIRYKGVLGTIITLAKTEGPVK) are mitochondrial matrix. K60 contacts fatty acid 16:0. The helical transmembrane segment at 78 to 100 (LYSGLPAGLQRQISFASLRIGLY) threads the bilayer. The Mitochondrial intermembrane portion of the chain corresponds to 101-118 (DTVQEFFTTGKEASLGSK). A helical membrane pass occupies residues 119-135 (ISAGLMTGGVAVFIGQP). At 136–180 (TEVVKVRLQAQSHLHGPKPRYTGTYNAYRIIATTEGLTGLWKGTT) the chain is on the mitochondrial matrix side. The chain crosses the membrane as a helical span at residues 181-197 (PNLTRNVIINCTELVTY). Topologically, residues 198–214 (DLMKEALVKNKLLADDV) are mitochondrial intermembrane. The helical transmembrane segment at 215-234 (PCHFVSAVVAGFCTTVLSSP) threads the bilayer. Residues 235–268 (VDVVKTRFVNSSPGQYTSVPNCAMMMLTREGPSA) are Mitochondrial matrix-facing. The residue at position 256 (C256) is a Cysteine sulfenic acid (-SOH). Residues 269–291 (FFKGFVPSFLRLGSWNIIMFVCF) form a helical membrane-spanning segment. K271 serves as a coordination point for fatty acid 16:0. Residues 292–309 (EQLKQELMKSRHTMDCAT) are Mitochondrial intermembrane-facing.

It belongs to the mitochondrial carrier (TC 2.A.29) family. Most probably functions as a monomer. Binds one purine nucleotide per monomer. However, has also been suggested to function as a homodimer or a homotetramer. Tightly associates with cardiolipin in the mitochondrion inner membrane; may stabilize and regulate its activity. In terms of processing, may undergo sulfenylation upon cold exposure. May increase the sensitivity of UCP1 thermogenic function to the activation by noradrenaline probably through structural effects. Post-translationally, may undergo ubiquitin-mediated proteasomal degradation.

It localises to the mitochondrion inner membrane. The enzyme catalyses H(+)(in) = H(+)(out). With respect to regulation, has no constitutive proton transporter activity and has to be activated by long-chain fatty acids/LCFAs. Inhibited by purine nucleotides. Both purine nucleotides and LCFAs bind the cytosolic side of the transporter and directly compete to activate or inhibit it. Activated by noradrenaline and reactive oxygen species. Despite lacking canonical translational encoding for selenocysteine, a small pool of the protein has been observed to selectively incorporate selenocysteine at 'Cys-256'. Selenocysteine-modified protein is highly sensitive to redox modification and may constitute a pool of protein highly sensitive to activation by elevated levels of reactive oxygen species (ROS). Its function is as follows. Mitochondrial protein responsible for thermogenic respiration, a specialized capacity of brown adipose tissue and beige fat that participates in non-shivering adaptive thermogenesis to temperature and diet variations and more generally to the regulation of energy balance. Functions as a long-chain fatty acid/LCFA and proton symporter, simultaneously transporting one LCFA and one proton through the inner mitochondrial membrane. However, LCFAs remaining associated with the transporter via their hydrophobic tails, it results in an apparent transport of protons activated by LCFAs. Thereby, dissipates the mitochondrial proton gradient and converts the energy of substrate oxydation into heat instead of ATP. Regulates the production of reactive oxygen species/ROS by mitochondria. The protein is Mitochondrial brown fat uncoupling protein 1 of Bos taurus (Bovine).